Reading from the N-terminus, the 142-residue chain is Maximins y/H11 (142 aa).

A signal peptide spans 1 to 18; the sequence is MNFKYIVAVSFLITSGYA. Positions 19-43 are excised as a propeptide; sequence ESVKNDEQSLSQRDVLEEESLREIR. Phenylalanine 68 carries the phenylalanine amide modification. The propeptide occupies 72-121; sequence SAEDHEVMKRLEAVIRDLDSLDHPEEASERETRGFNQEEIANLFTKKEKR. The residue at position 141 (isoleucine 141) is an Isoleucine amide.

Belongs to the bombinin family. Expressed by the skin glands.

It is found in the secreted. Its function is as follows. Maximin-y shows antimicrobial activity against bacteria and against the fungus C.albicans. It has little hemolytic activity. Functionally, maximin-H11 shows antimicrobial activity against bacteria and against the fungus C.albicans. Shows strong hemolytic activity. The protein is Maximins y/H11 of Bombina maxima (Giant fire-bellied toad).